The following is a 166-amino-acid chain: Early E3 18.5 kDa glycoprotein (166 aa).

The first 19 residues, 1–19, serve as a signal peptide directing secretion; sequence MGPILVLLVLLSLLEPGSA. Residues 20–131 are Lumenal-facing; that stretch reads NYDPCLDFDP…SKDNIVTFSI (112 aa). N-linked (GlcNAc...) asparagine; by host glycosylation occurs at Asn-31. Intrachain disulfides connect Cys-32/Cys-50 and Cys-44/Cys-106. 3 N-linked (GlcNAc...) asparagine; by host glycosylation sites follow: Asn-63, Asn-67, and Asn-97. The chain crosses the membrane as a helical span at residues 132–152; that stretch reads AYCLCACLLTALLCVCIHLLV. At 153-166 the chain is on the cytoplasmic side; the sequence is TTRIKNANNKEKMP. The Di-lysine motif motif lies at 162 to 166; sequence KEKMP.

This sequence belongs to the adenoviridae E19 family. Both disulfide bonds are absolutely critical for the interaction with MHC antigens. Post-translationally, N-glycosylated; high-mannose.

Its subcellular location is the host endoplasmic reticulum membrane. Its function is as follows. Binds and retains class I heavy chains in the endoplasmic reticulum during the early period of virus infection, thereby impairing their transport to the cell surface. Also delays the expression of class I alleles that it cannot affect by direct retention. Binds transporters associated with antigen processing (TAP) and acts as a tapasin inhibitor, preventing class I/TAP association. In consequence, infected cells are masked for immune recognition by cytotoxic T-lymphocytes. This Human adenovirus B serotype 11 (strain Slobiski) (HAdV-11) protein is Early E3 18.5 kDa glycoprotein.